We begin with the raw amino-acid sequence, 345 residues long: Adenine deaminase (345 aa).

The Zn(2+) site is built by His-24, His-26, and His-204. Residue Glu-207 is the Proton donor of the active site. Asp-285 is a binding site for Zn(2+). A substrate-binding site is contributed by Asp-286.

Belongs to the metallo-dependent hydrolases superfamily. Adenosine and AMP deaminases family. Adenine deaminase type 2 subfamily. Requires Zn(2+) as cofactor.

The catalysed reaction is adenine + H2O + H(+) = hypoxanthine + NH4(+). Its function is as follows. Catalyzes the hydrolytic deamination of adenine to hypoxanthine. Plays an important role in the purine salvage pathway and in nitrogen catabolism. The polypeptide is Adenine deaminase (Albidiferax ferrireducens (strain ATCC BAA-621 / DSM 15236 / T118) (Rhodoferax ferrireducens)).